The following is a 686-amino-acid chain: Secretin GspD 2 (686 aa).

A signal peptide spans 1–40 (MFWRDITLSVWRKKTTGLKTKKRLLPLVLAAALCSSPVWA). Residues 41–140 (EEATFTANFK…VGEGSDNYAG (100 aa)) are N0, contacts GspC2. An N1 region spans residues 142-206 (EMVTKVVPVR…EVIQRVDHAG (65 aa)). Positions 207–279 (NRTEEVIPLD…LIRRLDSEME (73 aa)) are N2. The N3 stretch occupies residues 282-357 (GNSQVFYLKY…SLQSVIEQLD (76 aa)). Positions 360–627 (RAQVHVEALI…VFIRPTILRD (268 aa)) are secretin. Positions 414 to 433 (PQKGSTVISENGATTINPDT) are cap gate. Residues 629–686 (MAADGVSQRKYNYMRAEQIYRDEQGLSLMPHTAQPVLPAQNQALPPEVRAFLNAGRTR) form a s domain, contacts AspS2 region.

The protein belongs to the bacterial secretin family. GSP D subfamily. Forms a cylindrical channel with 15 subunits, each of which interacts with the surrounding pilotin AspS2 proteins (also called GspS-beta). Interacts with inner cell membrane protein GspC2 in the periplasm. Forms multimers in the outer membrane. The isolated N0 domain forms dimers that self-assemble into rings.

The protein resides in the cell outer membrane. Part of a type II secretion system (T2SS, formerly general secretion pathway, GSP) for the export of folded proteins across the outer membrane. This subunit forms the outer membrane channel. This chain is Secretin GspD 2 (gspD2), found in Escherichia coli O78:H11 (strain H10407 / ETEC).